A 142-amino-acid polypeptide reads, in one-letter code: Hemoglobin subunit alpha (142 aa).

In terms of domain architecture, Globin spans 2 to 142; it reads VLSAADKGHV…VSTVLTSKYR (141 aa). S4 bears the Phosphoserine mark. N6-succinyllysine occurs at positions 8 and 12. N6-acetyllysine; alternate is present on K17. Position 17 is an N6-succinyllysine; alternate (K17). Phosphotyrosine is present on Y25. S36 bears the Phosphoserine mark. K41 bears the N6-succinyllysine mark. The residue at position 50 (S50) is a Phosphoserine. Position 59 (H59) interacts with O2. H88 contributes to the heme b binding site. S103 carries the post-translational modification Phosphoserine. Phosphothreonine is present on T109. S125 bears the Phosphoserine mark. T135 and T138 each carry phosphothreonine. S139 bears the Phosphoserine mark.

It belongs to the globin family. In terms of assembly, heterotetramer of two alpha chains and two beta chains. As to expression, red blood cells.

Its function is as follows. Involved in oxygen transport from the lung to the various peripheral tissues. In terms of biological role, hemopressin acts as an antagonist peptide of the cannabinoid receptor CNR1. Hemopressin-binding efficiently blocks cannabinoid receptor CNR1 and subsequent signaling. This chain is Hemoglobin subunit alpha (HBA), found in Notamacropus eugenii (Tammar wallaby).